Reading from the N-terminus, the 847-residue chain is Pollen-specific leucine-rich repeat extensin-like protein 2 (847 aa).

A signal peptide spans 1 to 20 (MERPFGCFFILLLISYTVVA). 8 LRR repeats span residues 45–71 (INKV…AWKK), 106–130 (LTVV…LGLM), 131–153 (TDLA…SLSK), 155–178 (ALMY…SLSW), 179–202 (PSLK…IFDK), 204–224 (LDAI…TIGK), 226–248 (KASV…IGNM), and 249–273 (KNLN…GLLN). Residues asparagine 260 and asparagine 274 are each glycosylated (N-linked (GlcNAc...) asparagine). LRR repeat units lie at residues 296 to 319 (LASV…KFCK) and 321 to 343 (PNLD…CVPG). The segment at 381–847 (KDKCSGGSNG…SPPPPMFQGY (467 aa)) is disordered. A compositionally biased stretch (basic and acidic residues) spans 438-484 (PKHESPKPEEPENKHELPKQKESPKPQPSKPEDSPKPEQPKPEESPK). Pro residues-rich tracts occupy residues 485-499 (PEQP…PVSP) and 533-642 (VPPP…PPPT). The tract at residues 522–847 (SPPPPKVEDT…SPPPPMFQGY (326 aa)) is contains the Ser-Pro(4) repeats. 3 stretches are compositionally biased toward polar residues: residues 667 to 682 (QVPT…QILS), 688 to 720 (TPVQ…SPVQ), and 726 to 752 (QAPT…SQAP). Composition is skewed to low complexity over residues 768–783 (PVQS…SSPE) and 797–811 (NPSS…TDTS). Residues 838–847 (SPPPPMFQGY) show a composition bias toward pro residues.

Hydroxylated on proline residues in the S-P-P-P-P repeat. Post-translationally, O-glycosylated on hydroxyprolines. As to expression, expressed in flowers, stamen, pollen, and pollinated carpels (at protein level).

The protein localises to the secreted. It localises to the cell wall. Its function is as follows. Modulates cell morphogenesis by regulating cell wall formation and assembly, and/or growth polarization. This is Pollen-specific leucine-rich repeat extensin-like protein 2 (PEX2) from Arabidopsis thaliana (Mouse-ear cress).